We begin with the raw amino-acid sequence, 315 residues long: Ribosomal RNA small subunit methyltransferase H (315 aa).

S-adenosyl-L-methionine-binding positions include 35-37, D55, F80, D102, and Q109; that span reads GGH.

This sequence belongs to the methyltransferase superfamily. RsmH family.

It localises to the cytoplasm. It carries out the reaction cytidine(1402) in 16S rRNA + S-adenosyl-L-methionine = N(4)-methylcytidine(1402) in 16S rRNA + S-adenosyl-L-homocysteine + H(+). Specifically methylates the N4 position of cytidine in position 1402 (C1402) of 16S rRNA. The protein is Ribosomal RNA small subunit methyltransferase H of Buchnera aphidicola subsp. Baizongia pistaciae (strain Bp).